A 637-amino-acid polypeptide reads, in one-letter code: Chaperone protein HtpG (637 aa).

The tract at residues 1-345 (MSQQETHGFQ…SNDLPLNVSR (345 aa)) is a; substrate-binding. A b region spans residues 346-562 (EILQDNQVTT…EGEMSTQMIK (217 aa)). Residues 563–637 (LMQAAGQAVP…MNQMLLANAK (75 aa)) form a c region.

This sequence belongs to the heat shock protein 90 family. As to quaternary structure, homodimer.

It is found in the cytoplasm. Functionally, molecular chaperone. Has ATPase activity. In Shewanella denitrificans (strain OS217 / ATCC BAA-1090 / DSM 15013), this protein is Chaperone protein HtpG.